A 448-amino-acid chain; its full sequence is Hydroxycinnamoyl-CoA:piscidic acid hydroxycinnamoyltransferase (448 aa).

Residues His153 and Asp395 each act as proton acceptor in the active site.

This sequence belongs to the plant acyltransferase family. Highly expressed in root and rhizome. Expressed in senescent leaf and callus tissues. Expressed in detached leaf treated for 18 hours with ethephon, methyl jasmonate, salicylic acid or illuminated for 24 hours with UV light. Not expressed in mature leaf. Expressed at low levels in leaves and flowers.

The catalysed reaction is (2R,3S)-piscidate + (E)-4-coumaroyl-CoA = cimicifugate K + CoA. It catalyses the reaction (2R,3S)-piscidate + (E)-caffeoyl-CoA = cimicifugate D + CoA. It carries out the reaction (2R,3S)-piscidate + (E)-sinapoyl-CoA = cimicifugate J + CoA. The enzyme catalyses (2R,3S)-piscidate + (E)-feruloyl-CoA = cimicifugate E + CoA. It participates in phenylpropanoid metabolism. Catalyzes the formation of cimicifugic acids. Uses hydroxycinnamoyl-CoA thioesters as hydroxycinnamoyl donor substrates. Has a strict specificity for piscidic acid as an acceptor substrate as none of the various other acceptors tested including 4-hydroxyphenyllactic acid, malate, spermidine or tetrahydroxyhexanedioic acid are substrates. Donor substrates include 4-coumaroyl-CoA, caffeoyl-CoA, sinapoyl-CoA and feruloyl-CoA. No activity with cinnamoyl-CoA, isoferuloyl-CoA, 3,4-dimethoxycinnamoyl-CoA or 3,4-dihydroxybenzoyl-CoA as donors. In the reverse reaction with fukinolic acid and CoA as substrates, a formation of fukiic acid is evident. Hence, fukiic acid may also serve as an acceptor substrate. Involved in the biosynthesis of cimicifugic and possibly fukinolic acids. This chain is Hydroxycinnamoyl-CoA:piscidic acid hydroxycinnamoyltransferase, found in Actaea racemosa (Black cohosh).